The sequence spans 201 residues: Ribonuclease HII (201 aa).

An RNase H type-2 domain is found at 12-201; that stretch reads DLVAGVDEVG…VRELLDVPVQ (190 aa). 3 residues coordinate a divalent metal cation: Asp-18, Glu-19, and Asp-110.

It belongs to the RNase HII family. Requires Mn(2+) as cofactor. Mg(2+) is required as a cofactor.

Its subcellular location is the cytoplasm. The enzyme catalyses Endonucleolytic cleavage to 5'-phosphomonoester.. Endonuclease that specifically degrades the RNA of RNA-DNA hybrids. This chain is Ribonuclease HII, found in Pseudomonas aeruginosa (strain UCBPP-PA14).